Consider the following 240-residue polypeptide: Tetrahydromethanopterin S-methyltransferase subunit A (240 aa).

Residues 1–216 lie on the Cytoplasmic side of the membrane; the sequence is MADKKAPASG…DAALIAKFNS (216 aa). His-85 is a 5-hydroxybenzimidazolylcob(I)amide binding site. A helical membrane pass occupies residues 217–234; that stretch reads GYYNGKIQGIAIGLFLSL. Residues 235 to 240 are Extracellular-facing; that stretch reads LIFSLL.

It belongs to the MtrA family. As to quaternary structure, the complex is composed of 8 subunits; MtrA, MtrB, MtrC, MtrD, MtrE, MtrF, MtrG and MtrH. It depends on 5-hydroxybenzimidazolylcob(I)amide as a cofactor.

It is found in the cell membrane. The enzyme catalyses 5-methyl-5,6,7,8-tetrahydromethanopterin + coenzyme M + 2 Na(+)(in) = 5,6,7,8-tetrahydromethanopterin + methyl-coenzyme M + 2 Na(+)(out). It participates in one-carbon metabolism; methanogenesis from CO(2); methyl-coenzyme M from 5,10-methylene-5,6,7,8-tetrahydromethanopterin: step 2/2. Functionally, part of a complex that catalyzes the formation of methyl-coenzyme M and tetrahydromethanopterin from coenzyme M and methyl-tetrahydromethanopterin. This is an energy-conserving, sodium-ion translocating step. The sequence is that of Tetrahydromethanopterin S-methyltransferase subunit A from Methanococcus aeolicus (strain ATCC BAA-1280 / DSM 17508 / OCM 812 / Nankai-3).